The chain runs to 243 residues: Probable 2-phosphosulfolactate phosphatase (243 aa).

This sequence belongs to the ComB family. The cofactor is Mg(2+).

It carries out the reaction (2R)-O-phospho-3-sulfolactate + H2O = (2R)-3-sulfolactate + phosphate. This chain is Probable 2-phosphosulfolactate phosphatase, found in Synechococcus sp. (strain CC9605).